The following is a 568-amino-acid chain: MTLRLSRRAYAEMFGPTTGDRVRLADTDLLIEIERDFTIYGEEVKFGGGKVIRDGMGQSQRVAAEVPDTVITNAVILDHWGIVKADIAIKHGRIAAIGKAGNPDIQPGVTIPIGAGTEVIAGEGLIVTAGGIDTHIHFISPQQIDEALASGVTTMLGGGTGPATGTNATTCTPGPWHMERMLQAADGWPINLGFLGKGNASRPEPLLEQIAAGAIGLKLHEDWGTTPAAIDTCLSIADDTDTQVAIHTDTLNEAGFVESTVAAFKGRTIHTYHTEGAGGGHAPDILKVCGEANVLPSSTNPTRPYTINTLEEHLDMLMVCHHLDPSIAEDLAFAESRIRRETIAAEDILHDLGALSMLSSDSQAMGRVGEVIIRTWQTAHKMKVQRGALPEDSARNDNFRAKRYVAKYTINPAITHGIAHQVGSIEPGKWADLVLWEPAFFGIKPTMILKGGMIALAQMGDPNASIPTPQPVHYREMFATRGGALARTSLTFVSQLAADAGIAERYGLAKPIVPVRNCRQVTKADMIHNAWRPAISVDPETYDVIADGQLLTCEPASVLPMAQRYFLF.

Residues 130-568 enclose the Urease domain; it reads GGIDTHIHFI…LPMAQRYFLF (439 aa). Ni(2+) is bound by residues His-135, His-137, and Lys-218. Lys-218 carries the N6-carboxylysine modification. His-220 is a binding site for substrate. Ni(2+) contacts are provided by His-247 and His-273. Catalysis depends on His-321, which acts as the Proton donor. Asp-361 contacts Ni(2+).

Belongs to the metallo-dependent hydrolases superfamily. Urease alpha subunit family. As to quaternary structure, heterotrimer of UreA (gamma), UreB (beta) and UreC (alpha) subunits. Three heterotrimers associate to form the active enzyme. Ni cation is required as a cofactor. Carboxylation allows a single lysine to coordinate two nickel ions.

It is found in the cytoplasm. It catalyses the reaction urea + 2 H2O + H(+) = hydrogencarbonate + 2 NH4(+). It functions in the pathway nitrogen metabolism; urea degradation; CO(2) and NH(3) from urea (urease route): step 1/1. The polypeptide is Urease subunit alpha (Burkholderia multivorans (strain ATCC 17616 / 249)).